Consider the following 106-residue polypeptide: Integration host factor subunit alpha (106 aa).

Belongs to the bacterial histone-like protein family. Heterodimer of an alpha and a beta chain.

This protein is one of the two subunits of integration host factor, a specific DNA-binding protein that functions in genetic recombination as well as in transcriptional and translational control. The sequence is that of Integration host factor subunit alpha from Methylobacterium radiotolerans (strain ATCC 27329 / DSM 1819 / JCM 2831 / NBRC 15690 / NCIMB 10815 / 0-1).